Consider the following 81-residue polypeptide: LYR motif-containing protein At3g19508 (81 aa).

This sequence belongs to the complex I LYR family. LYRM9 subfamily.

The chain is LYR motif-containing protein At3g19508 from Arabidopsis thaliana (Mouse-ear cress).